The following is a 218-amino-acid chain: Cytochrome b6 (218 aa).

The chain crosses the membrane as a helical span at residues 35–55 (IFYCLGGITLVCFLIQFATGF). Cysteine 38 serves as a coordination point for heme c. Residues histidine 89 and histidine 103 each contribute to the heme b site. 3 helical membrane-spanning segments follow: residues 93–113 (ASMM…TGGF), 119–139 (LTWV…VTGY), and 189–209 (LHTF…FLMI). Histidine 190 and histidine 205 together coordinate heme b.

The protein belongs to the cytochrome b family. PetB subfamily. In terms of assembly, the 4 large subunits of the cytochrome b6-f complex are cytochrome b6, subunit IV (17 kDa polypeptide, PetD), cytochrome f and the Rieske protein, while the 4 small subunits are PetG, PetL, PetM and PetN. The complex functions as a dimer. It depends on heme b as a cofactor. The cofactor is heme c.

The protein localises to the cellular thylakoid membrane. Its function is as follows. Component of the cytochrome b6-f complex, which mediates electron transfer between photosystem II (PSII) and photosystem I (PSI), cyclic electron flow around PSI, and state transitions. The protein is Cytochrome b6 of Synechococcus sp. (strain CC9605).